The chain runs to 119 residues: Large ribosomal subunit protein bL20 (119 aa).

This sequence belongs to the bacterial ribosomal protein bL20 family.

In terms of biological role, binds directly to 23S ribosomal RNA and is necessary for the in vitro assembly process of the 50S ribosomal subunit. It is not involved in the protein synthesizing functions of that subunit. In Geobacillus stearothermophilus (Bacillus stearothermophilus), this protein is Large ribosomal subunit protein bL20 (rplT).